The primary structure comprises 376 residues: Spermidine/putrescine import ATP-binding protein PotA (376 aa).

Residues 6 to 236 (INIVNVNKSF…PADTFVADFL (231 aa)) enclose the ABC transporter domain. 38 to 45 (GPSGCGKT) provides a ligand contact to ATP.

This sequence belongs to the ABC transporter superfamily. Spermidine/putrescine importer (TC 3.A.1.11.1) family. The complex is composed of two ATP-binding proteins (PotA), two transmembrane proteins (PotB and PotC) and a solute-binding protein (PotD).

The protein resides in the cell inner membrane. The catalysed reaction is ATP + H2O + polyamine-[polyamine-binding protein]Side 1 = ADP + phosphate + polyamineSide 2 + [polyamine-binding protein]Side 1.. Part of the ABC transporter complex PotABCD involved in spermidine/putrescine import. Responsible for energy coupling to the transport system. This is Spermidine/putrescine import ATP-binding protein PotA from Fusobacterium nucleatum subsp. nucleatum (strain ATCC 25586 / DSM 15643 / BCRC 10681 / CIP 101130 / JCM 8532 / KCTC 2640 / LMG 13131 / VPI 4355).